The sequence spans 646 residues: Serine/threonine-protein kinase sck2 (646 aa).

2 disordered regions span residues 17–85 (VSTN…LPEV) and 143–176 (GRDI…IQRT). Positions 68–80 (SDQSTVGNRNSND) are enriched in polar residues. Residues 149-165 (SSRDSANVSRSSSMMSS) show a composition bias toward low complexity. Positions 266–527 (FVPLKLIGKG…VEEVMKHPFF (262 aa)) constitute a Protein kinase domain. Residues 272–280 (IGKGTFGQV) and Lys-295 contribute to the ATP site. The active-site Proton acceptor is Asp-392. Residues 528-605 (DGIDWKKLAA…IDASAMDEAF (78 aa)) enclose the AGC-kinase C-terminal domain. The tract at residues 609-646 (NSNDSASSISSQDDYSKDNSDMDLNRANDEVFMGQIDP) is disordered. Over residues 610–621 (SNDSASSISSQD) the composition is skewed to low complexity. Basic and acidic residues predominate over residues 622–637 (DYSKDNSDMDLNRAND).

Belongs to the protein kinase superfamily. AGC Ser/Thr protein kinase family. PKC subfamily.

It catalyses the reaction L-seryl-[protein] + ATP = O-phospho-L-seryl-[protein] + ADP + H(+). The enzyme catalyses L-threonyl-[protein] + ATP = O-phospho-L-threonyl-[protein] + ADP + H(+). Protein kinase that is part of growth control pathway which is at least partially redundant with the cAMP pathway. In Schizosaccharomyces pombe (strain 972 / ATCC 24843) (Fission yeast), this protein is Serine/threonine-protein kinase sck2 (sck2).